Consider the following 88-residue polypeptide: MAHKKGASSSRNGRDSNAQRLGVKRFGGQTVKAGEILVRQRGTHFHPGVNVGRGGDDTLFALAAGAVQFGTKRGRKTVNIVAPAPVQA.

Residues M1–R25 form a disordered region. The span at A7 to Q19 shows a compositional bias: polar residues.

The protein belongs to the bacterial ribosomal protein bL27 family.

The chain is Large ribosomal subunit protein bL27 from Nocardia farcinica (strain IFM 10152).